A 441-amino-acid chain; its full sequence is Zinc finger protein ZIC 3 (441 aa).

A C2H2-type 1; atypical zinc finger spans residues 222–257 (LSCKWLEESPMNRPQKTCDRTFSSMHELVTHMTMEH). The segment at 266–293 (HICYWEECPRGGKSFKAKYKLVNHIRVH) adopts a C2H2-type 2; atypical zinc-finger fold. 3 C2H2-type zinc fingers span residues 299–323 (FPCP…KRTH), 329–353 (FKCE…MHVH), and 359–381 (YICK…MKVH). The segment at 375–441 (RKHMKVHESQ…LPPNFNEWYV (67 aa)) is disordered. Over residues 383-399 (SQGSDSSPAASSGYESA) the composition is skewed to low complexity. Residues 406–429 (SANSEEPSKNSSATHQTNNSSHNT) show a composition bias toward polar residues.

It belongs to the GLI C2H2-type zinc-finger protein family.

The protein localises to the nucleus. It is found in the cytoplasm. Its function is as follows. Probably acts as a transcriptional activator. May bind to the minimal GLI-consensus sequence 5'-GGGTGGTC-3'. Can determine the ectodermal cell fate and promote the earliest step of neural and neural crest development. Involved in establishing left-right asymmetry in the embryo. This chain is Zinc finger protein ZIC 3 (zic3), found in Xenopus tropicalis (Western clawed frog).